The following is a 917-amino-acid chain: MATTVKVLAKELKRTAPDLLEQLKAAGIEKGSEDDSITEKDKTVLLEHLQKAHGSTDTGARKKITLIKRESSEIRQADSAGRTRTVQVEVRKKRVLVKAGDKAPEEVAAQPVKQVAPAAPAKPVISEEELEKRAAEATRQAELLARQEAEMKAAEEARQKEVTVPVVKEVAPVDKAPVAPAVAEKKLAADKAAKDLAASKEKELADIRARRAAAEAEALAIRDMMSAPARVLKAPSEVAAEEAKKGTLHKPAKAEGAEDKKKAATKVGGKTIKSSETSSTWQEEGTRKSGGLKTRGDTSGGVGGWRSGGGRKKQRQIAEANVDTNFQVPIEPVIRDVHVPETITVAELAHAMAVKSAEVIKLLMGMGQMVTINQVLDQDTAMIIVEEMGHKAHAAKLDDPDLDLGTEGHDAELLPRPPVVTVMGHVDHGKTSLLDKIRTAKVAIGEVGGITQHIGAYHVETPRGMITFLDTPGHEAFTAMRARGAKATDIVILVVAADDGVMPQTKEAIHHAIAGGVPLVVAINKIDKPEANSERVKAELVAEQVVLEEYGGDVPFIPVSAKTGEGIDALLENVLLQAEILELKAPKEAPAQGLVIEARLDKGKGPVATVLVQSGTLKRGDMLLAGSSFGRVRAMMDENGKPCNEAGPSIPVEIQGLSEVPAAGEAVQVMPDERKAREIALFRQGKFRDVKLAKQQAVKLENMMETIGEGAIEAKLLPLIIKADVQGSQEALSQLLMKLSIPEVKVQIVHAAVGGITETDVNLAVVSKAVIIGFNSRADAAARKLAENNGVDIRYHNIIYDAVDEVKLALSGMLIPGKKEEITGLVEIRQVFLVSKVGAIAGCLVVDGIVKRTSSVRLLRDNVVVWTGELDSLKRFKDDAKEVRAGVECGLSLKGYNDIKEGDQLEVFEVTEVARSL.

The tract at residues glutamate 241–lysine 312 is disordered. Positions alanine 252–lysine 262 are enriched in basic and acidic residues. Over residues serine 274–glutamate 283 the composition is skewed to polar residues. Gly residues predominate over residues threonine 298 to glycine 308. A tr-type G domain is found at proline 415–glutamate 582. The G1 stretch occupies residues glycine 424–threonine 431. Residue glycine 424–threonine 431 participates in GTP binding. Residues glycine 449–histidine 453 are G2. Residues aspartate 470–glycine 473 form a G3 region. Residues aspartate 470–histidine 474 and asparagine 524–aspartate 527 each bind GTP. A G4 region spans residues asparagine 524–aspartate 527. Residues serine 560–lysine 562 are G5.

It belongs to the TRAFAC class translation factor GTPase superfamily. Classic translation factor GTPase family. IF-2 subfamily.

It is found in the cytoplasm. Its function is as follows. One of the essential components for the initiation of protein synthesis. Protects formylmethionyl-tRNA from spontaneous hydrolysis and promotes its binding to the 30S ribosomal subunits. Also involved in the hydrolysis of GTP during the formation of the 70S ribosomal complex. The sequence is that of Translation initiation factor IF-2 from Polynucleobacter necessarius subsp. necessarius (strain STIR1).